Here is a 221-residue protein sequence, read N- to C-terminus: GTP cyclohydrolase III (221 aa).

This sequence belongs to the archaeal-type GTP cyclohydrolase family.

The enzyme catalyses GTP + 3 H2O = 2-amino-5-formylamino-6-(5-phospho-D-ribosylamino)pyrimidin-4(3H)-one + 2 phosphate + 2 H(+). In terms of biological role, catalyzes the formation of 2-amino-5-formylamino-6-ribofuranosylamino-4(3H)-pyrimidinone ribonucleotide monophosphate and inorganic phosphate from GTP. Also has an independent pyrophosphate phosphohydrolase activity. The protein is GTP cyclohydrolase III of Pyrobaculum calidifontis (strain DSM 21063 / JCM 11548 / VA1).